The chain runs to 259 residues: UPF0246 protein NGK_0633 (259 aa).

It belongs to the UPF0246 family.

This chain is UPF0246 protein NGK_0633, found in Neisseria gonorrhoeae (strain NCCP11945).